A 129-amino-acid chain; its full sequence is UPF0146 protein VNG_2609C (129 aa).

The protein belongs to the UPF0146 family.

The sequence is that of UPF0146 protein VNG_2609C from Halobacterium salinarum (strain ATCC 700922 / JCM 11081 / NRC-1) (Halobacterium halobium).